An 872-amino-acid chain; its full sequence is DNA mismatch repair protein MutS (872 aa).

632–639 (GPNMGGKS) contributes to the ATP binding site.

It belongs to the DNA mismatch repair MutS family.

In terms of biological role, this protein is involved in the repair of mismatches in DNA. It is possible that it carries out the mismatch recognition step. This protein has a weak ATPase activity. This is DNA mismatch repair protein MutS from Colwellia psychrerythraea (strain 34H / ATCC BAA-681) (Vibrio psychroerythus).